The following is a 188-amino-acid chain: GTPase KRas (188 aa).

Position 1 is an N-acetylmethionine (Met-1). Position 2 is an N-acetylthreonine; in GTPase KRas, N-terminally processed (Thr-2). GTP is bound by residues 10 to 18 (GAGGVGKSA), 29 to 35 (VDEYDPT), and 59 to 60 (AG). The short motif at 32 to 40 (YDPTIEDSY) is the Effector region element. Position 104 is an N6-acetyllysine (Lys-104). GTP is bound at residue 116-119 (NKCD). The tract at residues 166–185 (HKEKMSKDGKKKKKKSKTKC) is hypervariable region. The interval 167–188 (KEKMSKDGKKKKKKSKTKCIIM) is disordered. Cys-185 is subject to Cysteine methyl ester. The S-farnesyl cysteine moiety is linked to residue Cys-185. Positions 186–188 (IIM) are cleaved as a propeptide — removed in mature form.

This sequence belongs to the small GTPase superfamily. Ras family. As to quaternary structure, interacts with PHLPP. Interacts (active GTP-bound form preferentially) with RGS14. Interacts (when farnesylated) with PDE6D; this promotes dissociation from the cell membrane. Interacts with SOS1. Interacts (when farnesylated) with GPR31. Interacts with RAP1GDS1. Interacts (active GTP-bound form) with both SHOC2 and PP1c (all isoforms) to form a tertiary complex; SHOC2 and PP1c preferably bind M-Ras/MRAS, but they also bind K-Ras/KRAS, N-Ras/NRAS and H-Ras/HRAS. Interacts (GTP-bound form) with MAPKAP1/SIN1; inhibiting K-Ras/KRAS activity. Post-translationally, acetylation at Lys-104 prevents interaction with guanine nucleotide exchange factors (GEFs).

It is found in the cell membrane. The protein resides in the cytoplasm. Its subcellular location is the cytosol. The catalysed reaction is GTP + H2O = GDP + phosphate + H(+). Its activity is regulated as follows. Alternates between an inactive form bound to GDP and an active form bound to GTP. Activated by a guanine nucleotide-exchange factor (GEF) and inactivated by a GTPase-activating protein (GAP). Interaction with SOS1 promotes exchange of bound GDP to GTP. Ras proteins bind GDP/GTP and possess intrinsic GTPase activity. Plays an important role in the regulation of cell proliferation. Plays a role in promoting oncogenic events by inducing transcriptional silencing of tumor suppressor genes (TSGs) in colorectal cancer (CRC) cells in a ZNF304-dependent manner. This chain is GTPase KRas (KRAS), found in Monodelphis domestica (Gray short-tailed opossum).